The sequence spans 146 residues: Ribonuclease H (146 aa).

The RNase H type-1 domain occupies Met-1–Lys-143. Mg(2+)-binding residues include Asp-10, Glu-48, Asp-70, and Asp-135.

It belongs to the RNase H family. In terms of assembly, monomer. Requires Mg(2+) as cofactor.

The protein localises to the cytoplasm. It catalyses the reaction Endonucleolytic cleavage to 5'-phosphomonoester.. Functionally, endonuclease that specifically degrades the RNA of RNA-DNA hybrids. In Chlorobium phaeobacteroides (strain BS1), this protein is Ribonuclease H.